A 327-amino-acid polypeptide reads, in one-letter code: MKSFTATALAALLAQQAAAHSTFQQLWVDGTDFGSQCARLPQSNSPITNYNSNDMRCNIIGTRPQVKCPVRAGGTVTVEMHAQNGDRSCSQEAIGGAHHGPVSVYLTKVSDALTADGSTGWFKIFDDGWRKNPSGRVGDDDFWGTKDLNACCGKMNVKIPSDIPSGDYLLRAEAIALHAAGGAGGAQPYMTCYQITVSGGGSASPPTVSIPGHFKASDPGVQVNIHGAMTNYVIPGPAVYAGGSTKVAGSACSGCEATCAVGSSPTTSLTPPVSTSTPAPGNGGGGSPGGCTVQKYGQCGGQGYTGCTTCAAGSTCNTTNQWYHQCV.

The signal sequence occupies residues 1–19; it reads MKSFTATALAALLAQQAAA. Cu(2+) is bound by residues histidine 20 and histidine 98. Cysteine 68 and cysteine 192 are disulfide-bonded. 2 residues coordinate O2: histidine 178 and glutamine 187. Residue tyrosine 189 coordinates Cu(2+). The segment covering 264–280 has biased composition (low complexity); that stretch reads SPTTSLTPPVSTSTPAP. Residues 264-284 are disordered; that stretch reads SPTTSLTPPVSTSTPAPGNGG. In terms of domain architecture, CBM1 spans 291 to 327; the sequence is CTVQKYGQCGGQGYTGCTTCAAGSTCNTTNQWYHQCV. N-linked (GlcNAc...) asparagine glycosylation occurs at asparagine 317.

Belongs to the polysaccharide monooxygenase AA9 family. Cu(2+) serves as cofactor.

It is found in the secreted. The enzyme catalyses [(1-&gt;4)-beta-D-glucosyl]n+m + reduced acceptor + O2 = 4-dehydro-beta-D-glucosyl-[(1-&gt;4)-beta-D-glucosyl]n-1 + [(1-&gt;4)-beta-D-glucosyl]m + acceptor + H2O.. Lytic polysaccharide monooxygenase (LPMO) that depolymerizes crystalline and amorphous polysaccharides via the oxidation of scissile alpha- or beta-(1-4)-glycosidic bonds, yielding C1 or C4 oxidation products. Catalysis by LPMOs requires the reduction of the active-site copper from Cu(II) to Cu(I) by a reducing agent and H(2)O(2) or O(2) as a cosubstrate. The sequence is that of AA9 family lytic polysaccharide monooxygenase B (LPMO9B) from Podospora anserina (strain S / ATCC MYA-4624 / DSM 980 / FGSC 10383) (Pleurage anserina).